A 636-amino-acid chain; its full sequence is Alpha-L-iduronidase (636 aa).

The N-terminal stretch at 1–16 (MLSLLLVLTTLARIHA) is a signal peptide. Residues Pro39, Ile43, and His45 each contribute to the alpha-D-mannopyranose site. Alpha-L-iduronate-binding residues include His78, Asn169, and Glu170. The Proton donor role is filled by Glu170. Asn180 is a glycosylation site (N-linked (GlcNAc...) asparagine). Residue Lys257 coordinates alpha-L-iduronate. Residue Asn268 is glycosylated (N-linked (GlcNAc...) asparagine). 2 residues coordinate alpha-L-iduronate: Glu293 and Gly299. Catalysis depends on Glu293, which acts as the Nucleophile. Residue Trp300 coordinates alpha-D-mannopyranose. 2 residues coordinate alpha-L-iduronate: Asp342 and Arg356. N-linked (GlcNAc...) asparagine glycans are attached at residues Asn365, Asn448, Asn453, and Asn483. A disulfide bridge connects residues Cys529 and Cys565. An N-linked (GlcNAc...) asparagine glycan is attached at Asn622.

This sequence belongs to the glycosyl hydrolase 39 family.

The protein localises to the lysosome. The catalysed reaction is Hydrolysis of unsulfated alpha-L-iduronosidic linkages in dermatan sulfate.. Functionally, essential lysosomal hydrolase responsible for the degradation of glycosaminoglycans (GAG) such as heparan sulfate. Required for lysosome function and autophagy. Consequently, has an essential role in the development, maintenance and function of various cells, tissues, and organs, including the muscles and the central nervous system (CNS). The chain is Alpha-L-iduronidase from Drosophila melanogaster (Fruit fly).